The primary structure comprises 86 residues: Large ribosomal subunit protein uL23 (86 aa).

It belongs to the universal ribosomal protein uL23 family. Part of the 50S ribosomal subunit. Contacts protein L29.

Its function is as follows. Binds to 23S rRNA. One of the proteins that surrounds the polypeptide exit tunnel on the outside of the ribosome. The chain is Large ribosomal subunit protein uL23 from Methanococcus aeolicus (strain ATCC BAA-1280 / DSM 17508 / OCM 812 / Nankai-3).